Consider the following 82-residue polypeptide: Small ribosomal subunit protein uS17 (82 aa).

Belongs to the universal ribosomal protein uS17 family. Part of the 30S ribosomal subunit.

In terms of biological role, one of the primary rRNA binding proteins, it binds specifically to the 5'-end of 16S ribosomal RNA. The chain is Small ribosomal subunit protein uS17 from Shewanella sp. (strain MR-7).